The chain runs to 193 residues: Acyl-homoserine-lactone synthase (193 aa).

This sequence belongs to the autoinducer synthase family.

The catalysed reaction is a fatty acyl-[ACP] + S-adenosyl-L-methionine = an N-acyl-L-homoserine lactone + S-methyl-5'-thioadenosine + holo-[ACP] + H(+). In terms of biological role, required for the synthesis of OHHL (N-(3-oxohexanoyl)-L-homoserine lactone) also known as VAI or N-(beta-ketocaproyl)homoserine lactone or 3-oxo-N-(tetrahydro-2-oxo-3-furanyl)-hexanamide, an autoinducer molecule which binds to LuxR and thus acts in bioluminescence regulation. This is Acyl-homoserine-lactone synthase (luxI) from Aliivibrio fischeri (strain ATCC 700601 / ES114) (Vibrio fischeri).